Reading from the N-terminus, the 711-residue chain is Retrovirus-related Pol polyprotein from type-1 retrotransposable element R2 (711 aa).

Positions 45–323 (LHLLRGHVPT…QTFRYLGHFF (279 aa)) constitute a Reverse transcriptase domain. Residues 444–711 (LFSCPSFDHL…RAVWSRQAGA (268 aa)) are nucleic acid-binding endonuclease.

It catalyses the reaction DNA(n) + a 2'-deoxyribonucleoside 5'-triphosphate = DNA(n+1) + diphosphate. In Popillia japonica (Japanese beetle), this protein is Retrovirus-related Pol polyprotein from type-1 retrotransposable element R2.